Consider the following 263-residue polypeptide: 7beta-hydroxysteroid dehydrogenase (263 aa).

Residues 17–21, 40–41, and 66–67 contribute to the NADP(+) site; these read TEGVG, RR, and DF. Tyr-156 (proton acceptor) is an active-site residue. Ser-240 serves as a coordination point for NADP(+).

The protein belongs to the short-chain dehydrogenases/reductases (SDR) family.

It carries out the reaction a 7beta-hydroxysteroid + NADP(+) = a 7-oxosteroid + NADPH + H(+). The enzyme catalyses 7-oxolithocholate + NADPH + H(+) = ursodeoxycholate + NADP(+). 7beta-hydroxysteroid dehydrogenase that catalyzes the reduction of the 7-oxo group of 7-oxo-lithocholate (7-oxo-LCA), to yield ursodeoxycholate (UDCA). As R.gnavus is a common core bacterium of the human gut microbiota, this enzyme contributes to the formation of UDCA in the human colon. UDCA is regarded as a chemopreventive beneficial secondary bile acid due to its low hydrophobicity; it protects hepatocytes and bile duct epithelial cells against necrosis and apoptosis induced by more hydrophobic secondary bile acids like deoxycholate (DCA). This enzyme is also able to catalyze the reverse reaction in vitro, i.e. the oxidation of the 7beta-hydroxy group of UDCA to 7-oxo-LCA, but much less efficiently than the reduction reaction. This chain is 7beta-hydroxysteroid dehydrogenase, found in Mediterraneibacter gnavus (strain ATCC 29149 / DSM 114966 / JCM 6515 / VPI C7-9) (Ruminococcus gnavus).